Consider the following 203-residue polypeptide: Monothiol glutaredoxin-7 (203 aa).

Residues 1-32 (MAIVINKRNVRVLVITNLLLIVVFFVLRNSNA) form the signal peptide. A Glutaredoxin domain is found at 88–191 (AAEYNKIMEQ…DSFKKWSDGA (104 aa)). Cys-108 provides a ligand contact to [2Fe-2S] cluster.

This sequence belongs to the glutaredoxin family. Monothiol subfamily.

This Saccharomyces cerevisiae (strain ATCC 204508 / S288c) (Baker's yeast) protein is Monothiol glutaredoxin-7 (GRX7).